Here is an 83-residue protein sequence, read N- to C-terminus: MSGTTGERPFSDILTSIRYWVIHSITVPSLFIAGWLFVSTGLAYDVFGSPRPNEYFTEDRQETPLITDRFEALSQVKSQSEIK.

Residues 21–35 (VIHSITVPSLFIAGW) traverse the membrane as a helical segment. Residue His-23 coordinates heme.

It belongs to the PsbE/PsbF family. Heterodimer of an alpha subunit and a beta subunit. PSII is composed of 1 copy each of membrane proteins PsbA, PsbB, PsbC, PsbD, PsbE, PsbF, PsbH, PsbI, PsbJ, PsbK, PsbL, PsbM, PsbT, PsbX, PsbY, PsbZ, Psb30/Ycf12, at least 3 peripheral proteins of the oxygen-evolving complex and a large number of cofactors. It forms dimeric complexes. Heme b serves as cofactor.

The protein resides in the plastid. It localises to the chloroplast thylakoid membrane. Its function is as follows. This b-type cytochrome is tightly associated with the reaction center of photosystem II (PSII). PSII is a light-driven water:plastoquinone oxidoreductase that uses light energy to abstract electrons from H(2)O, generating O(2) and a proton gradient subsequently used for ATP formation. It consists of a core antenna complex that captures photons, and an electron transfer chain that converts photonic excitation into a charge separation. In Oltmannsiellopsis viridis (Marine flagellate), this protein is Cytochrome b559 subunit alpha.